Consider the following 181-residue polypeptide: UPF0397 protein STER_0346 (181 aa).

Helical transmembrane passes span 11–31 (ATGIGAALFIIIGMFVNIPIF), 45–65 (LFSVIFGPITGFFMGFIGHAL), 72–92 (GNISWAWVLASGITGLVIGLF), 109–129 (IWFNLAQALGLLIGYGVVTPI), and 147–167 (FVAGVANFITIAIGGTLLLAI).

This sequence belongs to the UPF0397 family.

It localises to the cell membrane. The protein is UPF0397 protein STER_0346 of Streptococcus thermophilus (strain ATCC BAA-491 / LMD-9).